The primary structure comprises 182 residues: Ribosome-recycling factor (182 aa).

The protein belongs to the RRF family.

Its subcellular location is the cytoplasm. Its function is as follows. Responsible for the release of ribosomes from messenger RNA at the termination of protein biosynthesis. May increase the efficiency of translation by recycling ribosomes from one round of translation to another. This chain is Ribosome-recycling factor, found in Prochlorococcus marinus (strain MIT 9515).